A 196-amino-acid polypeptide reads, in one-letter code: uncharacterized protein (196 aa).

An N-terminal signal peptide occupies residues 1-23 (MSARAPKELRLALPPCLLNRTFA). Residues Asn19 and Asn26 are each glycosylated (N-linked (GlcNAc...) asparagine). Over 24–60 (SHNASGGSNAGIRSSGAGGGTCITQVGQQLFQSFSST) the chain is Extracellular. The chain crosses the membrane as a helical span at residues 61 to 81 (LVLIVLVTLIFCLIVLSLSTF). Topologically, residues 82–196 (HIHKRRMKKR…EGLLQTVVLS (115 aa)) are cytoplasmic. Residues 93-184 (MQRAQEEYER…AHAASSCLDT (92 aa)) are disordered. Basic and acidic residues-rich tracts occupy residues 95–106 (RAQEEYERDHCS) and 124–135 (HGKETRLERQPR). Residues 161 to 171 (CAPPPPPPVPS) show a composition bias toward pro residues. Low complexity predominate over residues 172-181 (PHGAHAASSC).

It is found in the membrane. This is an uncharacterized protein from Rattus norvegicus (Rat).